We begin with the raw amino-acid sequence, 38 residues long: Potassium channel toxin alpha-KTx 3.7 (38 aa).

Intrachain disulfides connect Cys8–Cys28, Cys14–Cys33, and Cys18–Cys35.

This sequence belongs to the short scorpion toxin superfamily. Potassium channel inhibitor family. Alpha-KTx 03 subfamily. As to expression, expressed by the venom gland.

It is found in the secreted. Blocks voltage-gated potassium channels Kv1.1/KCNA1 (IC(50)=0.6 nM), Kv1.2/KCNA2 (IC(50)=5.4 nM), Kv1.3/KCNA3 (IC(50)=0.014 nM) potently, and moderately block intermediate conductance calcium-activated potassium channels KCa3.1/KCNN4 (IC(50)=225 nM). Also shows activity on muscle-type nicotinic acetylcholine receptor (nAChR), since it reversibly and dose-dependently inhibits acetylcholine-induced current through mouse muscle-type nAChR heterologously expressed in Xenopus oocytes (IC(50)=1.6 uM). The protein is Potassium channel toxin alpha-KTx 3.7 of Orthochirus scrobiculosus (Central Asian scorpion).